A 455-amino-acid chain; its full sequence is Golgi pH regulator (455 aa).

Helical transmembrane passes span 46–66 (ITFA…LGAL), 79–99 (LYVI…YFVV), 111–131 (LFAC…GDPF), and 150–170 (VGVI…VNCP). 2 N-linked (GlcNAc...) asparagine glycosylation sites follow: Asn-180 and Asn-243. Helical transmembrane passes span 290–310 (GYFF…NIVF), 343–363 (ISFI…LITL), 378–398 (VIVL…VLLM), and 425–445 (WFDV…YLAH).

It belongs to the Golgi pH regulator (TC 1.A.38) family. In terms of assembly, homotrimer.

The protein localises to the golgi apparatus membrane. It catalyses the reaction iodide(out) = iodide(in). The catalysed reaction is chloride(in) = chloride(out). It carries out the reaction bromide(in) = bromide(out). The enzyme catalyses fluoride(in) = fluoride(out). Voltage-gated channel that enables the transfer of anions such as iodide, chloride, bromide and fluoride which may function in counter-ion conductance and participates in Golgi acidification. The polypeptide is Golgi pH regulator (Salmo salar (Atlantic salmon)).